Reading from the N-terminus, the 179-residue chain is Large ribosomal subunit protein uL6 (179 aa).

This sequence belongs to the universal ribosomal protein uL6 family. As to quaternary structure, part of the 50S ribosomal subunit.

This protein binds to the 23S rRNA, and is important in its secondary structure. It is located near the subunit interface in the base of the L7/L12 stalk, and near the tRNA binding site of the peptidyltransferase center. The polypeptide is Large ribosomal subunit protein uL6 (Geotalea uraniireducens (strain Rf4) (Geobacter uraniireducens)).